A 93-amino-acid chain; its full sequence is MDSHTTEKRRGSYLRVLFKNGRLPVEGFLWNCDPLTGTLILIQPLTPNTDEVEDTHYRFYGIMSDAIQTIEPDESMSPLNQQSLAEYDSLLTS.

In terms of domain architecture, Sm spans 1–76 (MDSHTTEKRR…IQTIEPDESM (76 aa)).

Part of the core SMN complex at least composed of smn1, yip11/gem2, gem6, gem7 and gem8. Interacts with gem7; the interaction is direct.

Functionally, the SMN complex catalyzes the assembly of small nuclear ribonucleoproteins (snRNPs), the building blocks of the spliceosome, and thereby plays an important role in the splicing of cellular pre-mRNAs. Most spliceosomal snRNPs contain a common set of Sm proteins smb1, smd1, smd2, smd3, sme1, smf1 and smg1 that assemble in a heptameric protein ring on the Sm site of the small nuclear RNA to form the core snRNP (Sm core). In the cytosol, the Sm proteins smd1, smd2, sme1, smf1 and smg1 (5Sm) are trapped in an inactive 6S pICln-Sm complex by the chaperone saf5. To complete assembly of core snRNPs, the SMN complex accepts 5Sm from saf5. Binding of snRNA inside 5Sm triggers eviction of the SMN complex, thereby allowing binding of smd3 and smb1 to complete assembly of the core snRNP. This is an uncharacterized protein from Schizosaccharomyces pombe (strain 972 / ATCC 24843) (Fission yeast).